We begin with the raw amino-acid sequence, 194 residues long: uncharacterized protein (194 aa).

In terms of domain architecture, HTH tetR-type spans 6-66; it reads SGKYEKILQA…AIAENLLTHT (61 aa). The H-T-H motif DNA-binding region spans 29–48; sequence SISDIVKKAGTAQGTFYLYF.

This is an uncharacterized protein from Bacillus subtilis (strain 168).